Consider the following 1254-residue polypeptide: DNA-directed RNA polymerase subunit beta' (1254 aa).

4 residues coordinate Zn(2+): cysteine 59, cysteine 61, cysteine 76, and cysteine 79. Residues aspartate 501, aspartate 503, and aspartate 505 each contribute to the Mg(2+) site. The Zn(2+) site is built by cysteine 871, cysteine 946, cysteine 953, and cysteine 956.

Belongs to the RNA polymerase beta' chain family. In terms of assembly, the RNAP catalytic core consists of 2 alpha, 1 beta, 1 beta' and 1 omega subunit. When a sigma factor is associated with the core the holoenzyme is formed, which can initiate transcription. It depends on Mg(2+) as a cofactor. Zn(2+) serves as cofactor.

It catalyses the reaction RNA(n) + a ribonucleoside 5'-triphosphate = RNA(n+1) + diphosphate. In terms of biological role, DNA-dependent RNA polymerase catalyzes the transcription of DNA into RNA using the four ribonucleoside triphosphates as substrates. The polypeptide is DNA-directed RNA polymerase subunit beta' (Mesoplasma florum (strain ATCC 33453 / NBRC 100688 / NCTC 11704 / L1) (Acholeplasma florum)).